Consider the following 396-residue polypeptide: Cellular tumor antigen p53 (396 aa).

The transcription activation (acidic) stretch occupies residues 1-44 (MADLAENVSLPLSQESFEDLWKMNLNLVAVQPPETESWVGYDNF). Residues 63-89 (ATEPAPQPSISTLDTGSPPTSTVPTTS) form a disordered region. Residues 77–89 (TGSPPTSTVPTTS) are compositionally biased toward low complexity. Residues 90–281 (DYPGALGFQL…KTEEINLKKQ (192 aa)) mediate DNA binding. Residues Cys164, His167, Cys227, and Cys231 each contribute to the Zn(2+) site. An interaction with DNA region spans residues 262–269 (RVCACPGR). Residues 297–317 (KRAMKEASLPAPQPGASKKTK) carry the Bipartite nuclear localization signal motif. The tract at residues 301 to 322 (KEASLPAPQPGASKKTKSSPAV) is disordered. The segment at 325–356 (DEIYTLQIRGKEKYEMLKKFNDSLELSELVPV) is oligomerization. A Nuclear export signal motif is present at residues 339 to 350 (EMLKKFNDSLEL). The interval 369–392 (KRVAKRDFGVGPKKRKKLLVKEEK) is basic (repression of DNA-binding).

Belongs to the p53 family. In terms of assembly, binds DNA as a homotetramer. Zn(2+) serves as cofactor.

The protein localises to the cytoplasm. Its subcellular location is the nucleus. Functionally, multifunctional transcription factor that induces cell cycle arrest, DNA repair or apoptosis upon binding to its target DNA sequence. Acts as a tumor suppressor in many tumor types; induces growth arrest or apoptosis depending on the physiological circumstances and cell type. Negatively regulates cell division by controlling expression of a set of genes required for this process. One of the activated genes is an inhibitor of cyclin-dependent kinases. Apoptosis induction seems to be mediated either by stimulation of BAX and FAS antigen expression, or by repression of Bcl-2 expression. This is Cellular tumor antigen p53 (tp53) from Oncorhynchus mykiss (Rainbow trout).